The sequence spans 212 residues: Leucyl/phenylalanyl-tRNA--protein transferase (212 aa).

Belongs to the L/F-transferase family.

The protein resides in the cytoplasm. It catalyses the reaction N-terminal L-lysyl-[protein] + L-leucyl-tRNA(Leu) = N-terminal L-leucyl-L-lysyl-[protein] + tRNA(Leu) + H(+). The catalysed reaction is N-terminal L-arginyl-[protein] + L-leucyl-tRNA(Leu) = N-terminal L-leucyl-L-arginyl-[protein] + tRNA(Leu) + H(+). The enzyme catalyses L-phenylalanyl-tRNA(Phe) + an N-terminal L-alpha-aminoacyl-[protein] = an N-terminal L-phenylalanyl-L-alpha-aminoacyl-[protein] + tRNA(Phe). In terms of biological role, functions in the N-end rule pathway of protein degradation where it conjugates Leu, Phe and, less efficiently, Met from aminoacyl-tRNAs to the N-termini of proteins containing an N-terminal arginine or lysine. The chain is Leucyl/phenylalanyl-tRNA--protein transferase from Paracoccus denitrificans (strain Pd 1222).